A 373-amino-acid polypeptide reads, in one-letter code: Dual-specificity RNA methyltransferase RlmN (373 aa).

The active-site Proton acceptor is E94. The Radical SAM core domain occupies 100 to 339 (EDDRATLCVS…VIVRKTRGDD (240 aa)). A disulfide bridge links C107 with C344. [4Fe-4S] cluster is bound by residues C114, C118, and C121. S-adenosyl-L-methionine contacts are provided by residues 168 to 169 (GE), S200, 222 to 224 (SIH), and N301. C344 acts as the S-methylcysteine intermediate in catalysis.

It belongs to the radical SAM superfamily. RlmN family. Requires [4Fe-4S] cluster as cofactor.

It is found in the cytoplasm. It carries out the reaction adenosine(2503) in 23S rRNA + 2 reduced [2Fe-2S]-[ferredoxin] + 2 S-adenosyl-L-methionine = 2-methyladenosine(2503) in 23S rRNA + 5'-deoxyadenosine + L-methionine + 2 oxidized [2Fe-2S]-[ferredoxin] + S-adenosyl-L-homocysteine. It catalyses the reaction adenosine(37) in tRNA + 2 reduced [2Fe-2S]-[ferredoxin] + 2 S-adenosyl-L-methionine = 2-methyladenosine(37) in tRNA + 5'-deoxyadenosine + L-methionine + 2 oxidized [2Fe-2S]-[ferredoxin] + S-adenosyl-L-homocysteine. In terms of biological role, specifically methylates position 2 of adenine 2503 in 23S rRNA and position 2 of adenine 37 in tRNAs. m2A2503 modification seems to play a crucial role in the proofreading step occurring at the peptidyl transferase center and thus would serve to optimize ribosomal fidelity. This is Dual-specificity RNA methyltransferase RlmN from Shewanella woodyi (strain ATCC 51908 / MS32).